Consider the following 60-residue polypeptide: MAVPRNRLSNARKNSKRAHHAKKPKSLSICSNCGTARLPHCSCKACGTYADRTPTTQEAQ.

The segment at methionine 1 to leucine 27 is disordered. Residues lysine 13–lysine 25 are compositionally biased toward basic residues.

This sequence belongs to the bacterial ribosomal protein bL32 family.

This chain is Large ribosomal subunit protein bL32, found in Protochlamydia amoebophila (strain UWE25).